The chain runs to 370 residues: MDERMMTSAKRPEDRETEWSLRPRTLREYIGQDKLKENLTVFIQAALGRREPLDHVLLYGPPGLGKTTLAQIIAQELGVQLRVTSGPAIERPGDLAAILTNLQPMDVLFIDEIHRLNRAVEEVLYPAMEDFCLDIVIGKGPAARSIRIDLPRFTLVGATTRAGMLTSPLRDRFGVIHRLEYYRPDELEFIILRAATILGVTAEPEGAREIALRSRGTPRIANRLLKRVRDYAQVLSDGVVTGEVAREALRRLEVDPRGLDTTDQRLLEALIRKFAGGPVGVETLAASVGESVDTVEDVVEPYLMQLGFLNRTPRGRMATIAACAHLGVPVPAGLLALQEGRPALLPSATDDTSSTAVGAAAEQAALSFDE.

The interval 1-182 (MDERMMTSAK…FGVIHRLEYY (182 aa)) is large ATPase domain (RuvB-L). Residues Leu21, Arg22, Gly63, Lys66, Thr67, Thr68, 129–131 (EDF), Arg172, Tyr182, and Arg219 each bind ATP. Thr67 is a Mg(2+) binding site. A small ATPAse domain (RuvB-S) region spans residues 183-253 (RPDELEFIIL…VAREALRRLE (71 aa)). A head domain (RuvB-H) region spans residues 256–370 (PRGLDTTDQR…AEQAALSFDE (115 aa)). 2 residues coordinate DNA: Arg311 and Arg316.

It belongs to the RuvB family. Homohexamer. Forms an RuvA(8)-RuvB(12)-Holliday junction (HJ) complex. HJ DNA is sandwiched between 2 RuvA tetramers; dsDNA enters through RuvA and exits via RuvB. An RuvB hexamer assembles on each DNA strand where it exits the tetramer. Each RuvB hexamer is contacted by two RuvA subunits (via domain III) on 2 adjacent RuvB subunits; this complex drives branch migration. In the full resolvosome a probable DNA-RuvA(4)-RuvB(12)-RuvC(2) complex forms which resolves the HJ.

Its subcellular location is the cytoplasm. It catalyses the reaction ATP + H2O = ADP + phosphate + H(+). Functionally, the RuvA-RuvB-RuvC complex processes Holliday junction (HJ) DNA during genetic recombination and DNA repair, while the RuvA-RuvB complex plays an important role in the rescue of blocked DNA replication forks via replication fork reversal (RFR). RuvA specifically binds to HJ cruciform DNA, conferring on it an open structure. The RuvB hexamer acts as an ATP-dependent pump, pulling dsDNA into and through the RuvAB complex. RuvB forms 2 homohexamers on either side of HJ DNA bound by 1 or 2 RuvA tetramers; 4 subunits per hexamer contact DNA at a time. Coordinated motions by a converter formed by DNA-disengaged RuvB subunits stimulates ATP hydrolysis and nucleotide exchange. Immobilization of the converter enables RuvB to convert the ATP-contained energy into a lever motion, pulling 2 nucleotides of DNA out of the RuvA tetramer per ATP hydrolyzed, thus driving DNA branch migration. The RuvB motors rotate together with the DNA substrate, which together with the progressing nucleotide cycle form the mechanistic basis for DNA recombination by continuous HJ branch migration. Branch migration allows RuvC to scan DNA until it finds its consensus sequence, where it cleaves and resolves cruciform DNA. The protein is Holliday junction branch migration complex subunit RuvB of Heliobacterium modesticaldum (strain ATCC 51547 / Ice1).